Here is a 538-residue protein sequence, read N- to C-terminus: ATP synthase subunit beta 2 (538 aa).

The span at 1 to 10 (MADPQATNGT) shows a compositional bias: polar residues. The interval 1–30 (MADPQATNGTGAACAERDASDVGDVSDVGD) is disordered. 185 to 192 (GGAGVGKT) is an ATP binding site. The span at 494–505 (AAAREADARREA) shows a compositional bias: basic and acidic residues. The segment at 494–538 (AAAREADARREAAAAASVAGPGTTSGTTSDPASGSAEPQGARHGR) is disordered. Residues 506-529 (AAAASVAGPGTTSGTTSDPASGSA) are compositionally biased toward low complexity.

This sequence belongs to the ATPase alpha/beta chains family. As to quaternary structure, F-type ATPases have 2 components, CF(1) - the catalytic core - and CF(0) - the membrane proton channel. CF(1) has five subunits: alpha(3), beta(3), gamma(1), delta(1), epsilon(1). CF(0) has three main subunits: a(1), b(2) and c(9-12). The alpha and beta chains form an alternating ring which encloses part of the gamma chain. CF(1) is attached to CF(0) by a central stalk formed by the gamma and epsilon chains, while a peripheral stalk is formed by the delta and b chains.

The protein resides in the cell inner membrane. It carries out the reaction ATP + H2O + 4 H(+)(in) = ADP + phosphate + 5 H(+)(out). Its function is as follows. Produces ATP from ADP in the presence of a proton gradient across the membrane. The catalytic sites are hosted primarily by the beta subunits. This is ATP synthase subunit beta 2 from Burkholderia pseudomallei (strain K96243).